The sequence spans 396 residues: Probable sugar efflux transporter (396 aa).

12 consecutive transmembrane segments (helical) span residues valine 15–methionine 35, glycine 51–alanine 71, leucine 84–leucine 104, methionine 109–isoleucine 129, glutamine 137–glycine 157, valine 168–leucine 188, proline 209–tyrosine 229, asparagine 245–phenylalanine 265, proline 273–phenylalanine 293, threonine 297–leucine 317, valine 333–glycine 353, and isoleucine 365–leucine 385.

It belongs to the major facilitator superfamily. SotB (TC 2.A.1.2) family.

Its subcellular location is the cell inner membrane. In terms of biological role, involved in the efflux of sugars. The physiological role may be the reduction of the intracellular concentration of toxic sugars or sugar metabolites. The polypeptide is Probable sugar efflux transporter (Haemophilus influenzae (strain ATCC 51907 / DSM 11121 / KW20 / Rd)).